The sequence spans 308 residues: MAATKLHPALRNAIRAGANLPTEVISATFDVQEGIKLLSAFLLRHEPVCVLTGAGISTDSGIPDYRSPGRPPHRPLQHLEFLGSHERQQRYWARSLYGYPRIRDTMPNVGHQAINELQRRGLVGAIITQNVDGLHQRAGSQHVIDLHGRLDQVKCMNCHSITTRDELQSRLLADNKALLDQFSVVHDEAVRPDGDAVLDEDLYGRFTVAACASCGGVLKPNVVFFGGSLDPEDVKRASTAVSEASALFVVGTSLATWSAFRIVRQAVEEAKPVCVLNSGPTRADGVIPEYLRLCMPIGEVLPAALRQL.

A mitochondrion-targeting transit peptide spans 1-16 (MAATKLHPALRNAIRA). Positions 28 to 308 (TFDVQEGIKL…EVLPAALRQL (281 aa)) constitute a Deacetylase sirtuin-type domain. NAD(+) contacts are provided by residues 53–73 (GAGISTDSGIPDYRSPGRPPH) and 129–132 (QNVD). Residue histidine 147 is the Proton acceptor of the active site. 4 residues coordinate Zn(2+): cysteine 155, cysteine 158, cysteine 211, and cysteine 214. NAD(+) is bound by residues 251 to 253 (GTS), 277 to 279 (NSG), and isoleucine 297.

It belongs to the sirtuin family. Class II subfamily. It depends on Zn(2+) as a cofactor.

The protein localises to the mitochondrion matrix. The catalysed reaction is N(6)-acetyl-L-lysyl-[protein] + NAD(+) + H2O = 2''-O-acetyl-ADP-D-ribose + nicotinamide + L-lysyl-[protein]. In terms of biological role, NAD-dependent protein deacylase. Catalyzes the NAD-dependent hydrolysis of acyl groups from lysine residues. In Monosiga brevicollis (Choanoflagellate), this protein is NAD-dependent protein deacylase SIR4.